The primary structure comprises 537 residues: Cytochrome bd ubiquinol oxidase subunit 1 (537 aa).

Over M1–F24 the chain is Cytoplasmic. H21 contacts heme b. Residues V25 to M44 traverse the membrane as a helical segment. At T45 to A96 the chain is on the periplasmic side. Residues P97–F116 form a helical membrane-spanning segment. Residues F117–V131 are Cytoplasmic-facing. A helical transmembrane segment spans residues T132 to G151. Over W152–T189 the chain is Periplasmic. Heme b is bound at residue H188. The helical transmembrane segment at V190–L209 threads the bilayer. The Cytoplasmic portion of the chain corresponds to L210–S221. The chain crosses the membrane as a helical span at residues F222–D241. At E242–A394 the chain is on the periplasmic side. M395 provides a ligand contact to heme b. Residues M395–A414 traverse the membrane as a helical segment. At R415–D472 the chain is on the cytoplasmic side. The chain crosses the membrane as a helical span at residues L473–M492. The Periplasmic portion of the chain corresponds to Y493–A537.

The protein belongs to the cytochrome ubiquinol oxidase subunit 1 family. Heterodimer of subunits I and II. It depends on heme b as a cofactor. The cofactor is heme d cis-diol.

It is found in the cell inner membrane. It carries out the reaction 2 a ubiquinol + O2(in) + 4 H(+)(in) = 2 a ubiquinone + 2 H2O(in) + 4 H(+)(out). In terms of biological role, may be involved in maintaining the low intracellular oxygen concentration required for nitrogen fixation. The polypeptide is Cytochrome bd ubiquinol oxidase subunit 1 (cydA) (Azotobacter vinelandii).